Reading from the N-terminus, the 443-residue chain is UPF0597 protein Dvul_2496 (443 aa).

The interval 156–178 is disordered; the sequence is GMERAPEADGTLHGGASCEPSAS.

The protein belongs to the UPF0597 family.

The polypeptide is UPF0597 protein Dvul_2496 (Nitratidesulfovibrio vulgaris (strain DP4) (Desulfovibrio vulgaris)).